Reading from the N-terminus, the 282-residue chain is ATP synthase gamma chain (282 aa).

It belongs to the ATPase gamma chain family. In terms of assembly, F-type ATPases have 2 components, CF(1) - the catalytic core - and CF(0) - the membrane proton channel. CF(1) has five subunits: alpha(3), beta(3), gamma(1), delta(1), epsilon(1). CF(0) has three main subunits: a, b and c.

The protein resides in the cell membrane. In terms of biological role, produces ATP from ADP in the presence of a proton gradient across the membrane. The gamma chain is believed to be important in regulating ATPase activity and the flow of protons through the CF(0) complex. The sequence is that of ATP synthase gamma chain from Clostridium botulinum (strain Langeland / NCTC 10281 / Type F).